The sequence spans 210 residues: FMN-dependent NADH:quinone oxidoreductase (210 aa).

FMN contacts are provided by residues 17–19 (SRS), 102–105 (MWNL), and 148–151 (SCGG).

This sequence belongs to the azoreductase type 1 family. Homodimer. FMN serves as cofactor.

It catalyses the reaction 2 a quinone + NADH + H(+) = 2 a 1,4-benzosemiquinone + NAD(+). The catalysed reaction is N,N-dimethyl-1,4-phenylenediamine + anthranilate + 2 NAD(+) = 2-(4-dimethylaminophenyl)diazenylbenzoate + 2 NADH + 2 H(+). Its function is as follows. Quinone reductase that provides resistance to thiol-specific stress caused by electrophilic quinones. In terms of biological role, also exhibits azoreductase activity. Catalyzes the reductive cleavage of the azo bond in aromatic azo compounds to the corresponding amines. This Trichlorobacter lovleyi (strain ATCC BAA-1151 / DSM 17278 / SZ) (Geobacter lovleyi) protein is FMN-dependent NADH:quinone oxidoreductase.